The following is a 211-amino-acid chain: Small ribosomal subunit protein uS3 (211 aa).

The region spanning 38 to 106 (LRKFIKKAFY…NIELNIIEVK (69 aa)) is the KH type-2 domain.

The protein belongs to the universal ribosomal protein uS3 family. In terms of assembly, part of the 30S ribosomal subunit. Forms a tight complex with proteins S10 and S14.

In terms of biological role, binds the lower part of the 30S subunit head. Binds mRNA in the 70S ribosome, positioning it for translation. In Ehrlichia ruminantium (strain Welgevonden), this protein is Small ribosomal subunit protein uS3.